The following is a 417-amino-acid chain: Gamma-glutamyl phosphate reductase (417 aa).

Belongs to the gamma-glutamyl phosphate reductase family.

It localises to the cytoplasm. The catalysed reaction is L-glutamate 5-semialdehyde + phosphate + NADP(+) = L-glutamyl 5-phosphate + NADPH + H(+). Its pathway is amino-acid biosynthesis; L-proline biosynthesis; L-glutamate 5-semialdehyde from L-glutamate: step 2/2. Its function is as follows. Catalyzes the NADPH-dependent reduction of L-glutamate 5-phosphate into L-glutamate 5-semialdehyde and phosphate. The product spontaneously undergoes cyclization to form 1-pyrroline-5-carboxylate. The polypeptide is Gamma-glutamyl phosphate reductase (Legionella pneumophila (strain Lens)).